The primary structure comprises 280 residues: Coiled-coil domain-containing protein 106 (280 aa).

Positions Thr63–Arg101 form a coiled coil. The segment covering Glu103–Ser121 has biased composition (basic and acidic residues). The disordered stretch occupies residues Glu103–Val176. Phosphoserine is present on Ser130. Residues Glu133–Gly146 are compositionally biased toward low complexity. A Bipartite nuclear localization signal motif is present at residues Arg151–Arg164. Basic residues predominate over residues Arg152 to Pro168.

As to quaternary structure, interacts with p53/TP53.

The protein resides in the nucleus. Functionally, promotes the degradation of p53/TP53 protein and inhibits its transactivity. In Homo sapiens (Human), this protein is Coiled-coil domain-containing protein 106 (CCDC106).